Here is a 133-residue protein sequence, read N- to C-terminus: Ribonuclease P protein component (133 aa).

This sequence belongs to the RnpA family. As to quaternary structure, consists of a catalytic RNA component (M1 or rnpB) and a protein subunit.

It carries out the reaction Endonucleolytic cleavage of RNA, removing 5'-extranucleotides from tRNA precursor.. In terms of biological role, RNaseP catalyzes the removal of the 5'-leader sequence from pre-tRNA to produce the mature 5'-terminus. It can also cleave other RNA substrates such as 4.5S RNA. The protein component plays an auxiliary but essential role in vivo by binding to the 5'-leader sequence and broadening the substrate specificity of the ribozyme. The protein is Ribonuclease P protein component of Pseudomonas savastanoi pv. phaseolicola (strain 1448A / Race 6) (Pseudomonas syringae pv. phaseolicola (strain 1448A / Race 6)).